The primary structure comprises 861 residues: ToMV susceptible protein tm-2 (861 aa).

A coiled-coil region spans residues 63 to 83 (VKNLLKDIQELAGDVEDLLDD). In terms of domain architecture, NB-ARC spans 162-388 (DDFNMLQAKL…LESMGHKVQD (227 aa)). 185 to 192 (GMPGLGKT) contacts ATP. LRR repeat units lie at residues 225–248 (LDIA…NLRS), 305–327 (LHAL…IFNF), 388–411 (DGCA…CFLY), 449–472 (LAED…TYNG), 510–536 (VARL…KLEK), 585–608 (MTCL…IVKL), 609–631 (TRLE…VWES), 652–680 (ISSF…FFEP), 689–713 (LRKL…PVPK), 735–758 (YPKI…AFPP), 781–804 (LPKL…LSGE), and 810–835 (FPQL…DVSM).

This sequence belongs to the disease resistance NB-LRR family. (Microbial infection) Fails to interact with the tobamovirus mouvement protein of tobacco mosaic virus (TMV).

Its subcellular location is the cell membrane. Functionally, potential inhibitor of viral mouvements which may confer resistance to some tobamoviruses but not to the tomato mosaic virus (ToMV) and tobacco mosaic virus (TMV). This Solanum lycopersicum (Tomato) protein is ToMV susceptible protein tm-2.